A 488-amino-acid polypeptide reads, in one-letter code: PPE family protein PPE10 (488 aa).

2 disordered regions span residues 207-232 (NNNW…NIGS) and 443-488 (SDAG…LRTE).

It belongs to the mycobacterial PPE family.

It is found in the secreted. Functionally, plays a major role in the integrity and stability of the capsule. The sequence is that of PPE family protein PPE10 from Mycobacterium marinum (strain ATCC BAA-535 / M).